The chain runs to 401 residues: Aspartokinase (401 aa).

It belongs to the aspartokinase family.

It catalyses the reaction L-aspartate + ATP = 4-phospho-L-aspartate + ADP. The protein operates within amino-acid biosynthesis; L-lysine biosynthesis via DAP pathway; (S)-tetrahydrodipicolinate from L-aspartate: step 1/4. Its pathway is amino-acid biosynthesis; L-methionine biosynthesis via de novo pathway; L-homoserine from L-aspartate: step 1/3. It participates in amino-acid biosynthesis; L-threonine biosynthesis; L-threonine from L-aspartate: step 1/5. The polypeptide is Aspartokinase (lysC) (Rickettsia felis (strain ATCC VR-1525 / URRWXCal2) (Rickettsia azadi)).